The sequence spans 570 residues: Hydroxylamine reductase (570 aa).

Cys5, Cys8, Cys17, and Cys23 together coordinate [4Fe-4S] cluster. Positions 266, 290, 334, 425, 453, 478, 513, and 515 each coordinate hybrid [4Fe-2O-2S] cluster. A Cysteine persulfide modification is found at Cys425.

The protein belongs to the HCP family. [4Fe-4S] cluster is required as a cofactor. Requires hybrid [4Fe-2O-2S] cluster as cofactor.

It localises to the cytoplasm. The catalysed reaction is A + NH4(+) + H2O = hydroxylamine + AH2 + H(+). Functionally, catalyzes the reduction of hydroxylamine to form NH(3) and H(2)O. The sequence is that of Hydroxylamine reductase from Clostridium tetani (strain Massachusetts / E88).